The sequence spans 500 residues: MEEIQRYLQLERSQQHDFLYPLIFQEYIYTFAHDHGFSRSIWSKNRGYDNKSSLLIVKRLITRMYQQNHFLISLNDSNQNPFWARNKNLYSQIISEGFAFIVEIPFSIRLISCLEGKKIVKSQNLRSIHSIFPFLEXNFSHLNFVLDILIPHPVHVEILDASSLHLLRFFLNEYCNWNSLITPKKASSSFSKINQRLFLFLYNSHVCEYESIFVFLRNQSSHLRSTSSGVLLERIYFYGKIEHLVNVFVTVKDFQANLWLVKEPCMHYIRYQRKSILASKGTSLFMNKWKCYLVTFWQWHFSLWFHPSRIYINQLSNHSLEFLGYLSSVRMNPSVVRSQILENAFLINNAIKKFDTLVPIIPLIASLAKAKFCNVLGHPISKPVRADLSDSNIIDRFGCICRNLSHYHSGSSKKKSLYRIKYILRLSCARTLARKHKSTVRAFLKRLGSELLEQFLMSEEDVLFXTFXKASSTLRGVNNSRIWYVDIISINDLAXHKSKF.

The protein belongs to the intron maturase 2 family. MatK subfamily.

It is found in the plastid. Its subcellular location is the chloroplast. Functionally, usually encoded in the trnK tRNA gene intron. Probably assists in splicing its own and other chloroplast group II introns. The sequence is that of Maturase K from Proboscidea louisianica (Louisiana Devil's-claw).